The sequence spans 730 residues: Envelope glycoprotein H (730 aa).

A signal peptide spans 1-21; the sequence is MQGLAFLAALACWRCISLTCG. Topologically, residues 22–706 are virion surface; sequence ATGALPTTAT…MYRRRAASAL (685 aa). 15 N-linked (GlcNAc...) asparagine; by host glycosylation sites follow: Asn46, Asn54, Asn101, Asn125, Asn131, Asn188, Asn209, Asn215, Asn267, Asn274, Asn365, Asn556, Asn613, Asn626, and Asn688. The interval 190-254 is interaction with gL; that stretch reads SGVALYGVVS…RNAKYALVAI (65 aa). Residues 707–727 traverse the membrane as a helical segment; it reads FLILSFIGFSGVIYFLYRLFS. The Intravirion portion of the chain corresponds to 728–730; the sequence is ILY.

The protein belongs to the herpesviridae glycoprotein H family. In terms of assembly, interacts with glycoprotein L (gL); this interaction is necessary for the correct processing and cell surface expression of gH. The heterodimer gH/gL seems to interact with gB trimers during fusion. When in complex with gL, interacts with host EPHA2; this interaction triggers EPHA2 phosphorylation and endocytosis allowing KSHV entry. Post-translationally, N-glycosylated, O-glycosylated, and sialylated.

It localises to the virion membrane. Its subcellular location is the host cell membrane. The protein localises to the host endosome membrane. Functionally, the heterodimer glycoprotein H-glycoprotein L is required for the fusion of viral and plasma membranes leading to virus entry into the host cell. Following initial binding to host receptor, membrane fusion is mediated by the fusion machinery composed of gB and the heterodimer gH/gL. May also be involved in the fusion between the virion envelope and the outer nuclear membrane during virion morphogenesis. Targets host EPHA2 to promote KSHV entry. This is Envelope glycoprotein H from Homo sapiens (Human).